The sequence spans 806 residues: Transitional endoplasmic reticulum ATPase (806 aa).

A2 carries the post-translational modification N-acetylalanine. Residues S3 and S7 each carry the phosphoserine modification. K8 is covalently cross-linked (Glycyl lysine isopeptide (Lys-Gly) (interchain with G-Cter in SUMO2)). S13 is modified (phosphoserine). K18 is covalently cross-linked (Glycyl lysine isopeptide (Lys-Gly) (interchain with G-Cter in SUMO2)). S37 carries the post-translational modification Phosphoserine. An ATP-binding site is contributed by 247 to 253 (PGTGKTL). K315 is modified (N6,N6,N6-trimethyllysine; by VCPKMT). N348 and H384 together coordinate ATP. A Phosphothreonine modification is found at T436. Residue S462 is modified to Phosphoserine. N6-acetyllysine is present on residues K502 and K505. 521 to 526 (GCGKTL) contacts ATP. At K668 the chain carries N6-acetyllysine; alternate. K668 bears the N6-succinyllysine; alternate mark. S702 is modified (phosphoserine). Positions 708-727 (RRERERQTNPSAMEVEEDDP) are disordered. K754 bears the N6-acetyllysine mark. The interval 768–806 (FGSFRFPSGNQGGAGPSQGSGGGTGGNVYTEDNDDDLYG) is disordered. 3 positions are modified to phosphoserine: S770, S775, and S787. The segment covering 777-793 (NQGGAGPSQGSGGGTGG) has biased composition (gly residues). The interaction with UBXN6 stretch occupies residues 797–806 (TEDNDDDLYG). Residues 802 to 806 (DDLYG) carry the PIM motif motif. The residue at position 805 (Y805) is a Phosphotyrosine.

The protein belongs to the AAA ATPase family. Homohexamer. Forms a ring-shaped particle of 12.5 nm diameter, that displays 6-fold radial symmetry. Part of a ternary complex containing STX5A, NSFL1C and VCP. NSFL1C forms a homotrimer that binds to one end of a VCP homohexamer. The complex binds to membranes enriched in phosphatidylethanolamine-containing lipids and promotes Golgi membrane fusion. Binds to a heterodimer of NPLOC4 and UFD1, binding to this heterodimer inhibits Golgi-membrane fusion. Interaction with VCIP135 leads to dissociation of the complex via ATP hydrolysis by VCP. Part of a ternary complex containing NPLOC4, UFD1 and VCP. Interacts with NSFL1C-like protein p37; the complex has membrane fusion activity and is required for Golgi and endoplasmic reticulum biogenesis. Interacts with SELENOS and SYVN1, as well as with DERL1 (via SHP-box motif), DERL2 and DERL3; which probably transfer misfolded proteins from the ER to VCP. Interacts with SVIP and DERL1. Component of a complex required to couple retrotranslocation, ubiquitination and deglycosylation composed of NGLY1, SAKS1, AMFR, VCP and RAD23B. Part of a complex composed of STUB1/CHIP, VCP/p97, CHRNA3, and UBXN2A that modulates the ubiquitination and endoplasmic reticulum-associated degradation (ERAD) of CHRNA3. Within the complex UBXN2A acts as a scaffold protein required for the interaction of CHRNA3 with VCP/p97, this interaction also inhibits CHRNA3 ubiquitination by STUB1/CHIP and subsequently ERAD. Interacts with UBXN2A (via UBX domain); the interaction is required for the interaction of CHRNA3 in the STUB1-VCP-UBXN2A complex. Directly interacts with UBXN4 and RNF19A. Interacts with CASR. Interacts with UBE4B and YOD1. Interacts with clathrin. Interacts with RNF103. Interacts with TRIM13 and TRIM21. Component of a VCP/p97-AMFR/gp78 complex that participates in the final step of the endoplasmic reticulum-associated degradation (ERAD) of HMGCR. Interacts directly with AMFR/gp78 (via its VIM). Interacts with RHBDD1 (via C-terminal domain). Interacts with SPRTN; leading to recruitment to stalled replication forks. Interacts with WASHC5. Interacts with UBOX5. Interacts (via N-terminus) with UBXN7, UBXN8, and probably several other UBX domain-containing proteins (via UBX domains); the interactions are mutually exclusive with VIM-dependent interactions such as those with AMFR and SELENOS. Forms a complex with UBQLN1 and UBXN4. Interacts (via the PIM motif) with RNF31 (via the PUB domain). Interacts with RIGI and RNF125; interaction takes place when RIGI is ubiquitinated via 'Lys-63'-linked ubiquitin on its CARD domains, leading to recruit RNF125 and promote ubiquitination and degradation of RIGI. Interacts with BAG6. Interacts with UBXN10. Interacts with UBXN6; the interaction with UBXN6 is direct and competitive with UFD1. Forms a ternary complex with CAV1 and UBXN6. Interacts with PLAA, UBXN6 and YOD1; may form a complex involved in macroautophagy. Interacts with ANKZF1. Interacts with ubiquitin-binding protein FAF1. Interacts with ZFAND2B (via VIM motif); the interaction is direct. Interacts with ZFAND1 (via its ubiquitin-like region); this interaction occurs in an arsenite-dependent manner. Interacts with CCDC47. Interacts with LMBR1L and UBAC2. Interacts with ATXN3. Interacts with TEX264; bridging VCP to covalent DNA-protein cross-links (DPCs). ISGylated. Post-translationally, methylation at Lys-315 catalyzed by VCPKMT is increased in the presence of ASPSCR1. Lys-315 methylation may decrease ATPase activity. In terms of processing, phosphorylated by tyrosine kinases in response to T-cell antigen receptor activation. Phosphorylated in mitotic cells.

Its subcellular location is the cytoplasm. The protein localises to the cytosol. It localises to the endoplasmic reticulum. It is found in the nucleus. The protein resides in the stress granule. The catalysed reaction is ATP + H2O = ADP + phosphate + H(+). Necessary for the fragmentation of Golgi stacks during mitosis and for their reassembly after mitosis. Involved in the formation of the transitional endoplasmic reticulum (tER). The transfer of membranes from the endoplasmic reticulum to the Golgi apparatus occurs via 50-70 nm transition vesicles which derive from part-rough, part-smooth transitional elements of the endoplasmic reticulum (tER). Vesicle budding from the tER is an ATP-dependent process. The ternary complex containing UFD1, VCP and NPLOC4 binds ubiquitinated proteins and is necessary for the export of misfolded proteins from the ER to the cytoplasm, where they are degraded by the proteasome. The NPLOC4-UFD1-VCP complex regulates spindle disassembly at the end of mitosis and is necessary for the formation of a closed nuclear envelope. Regulates E3 ubiquitin-protein ligase activity of RNF19A. Component of the VCP/p97-AMFR/gp78 complex that participates in the final step of the sterol-mediated ubiquitination and endoplasmic reticulum-associated degradation (ERAD) of HMGCR. Mediates the endoplasmic reticulum-associated degradation of CHRNA3 in cortical neurons as part of the STUB1-VCP-UBXN2A complex. Involved in endoplasmic reticulum stress-induced pre-emptive quality control, a mechanism that selectively attenuates the translocation of newly synthesized proteins into the endoplasmic reticulum and reroutes them to the cytosol for proteasomal degradation. Involved in clearance process by mediating G3BP1 extraction from stress granules. Also involved in DNA damage response: recruited to double-strand breaks (DSBs) sites in a RNF8- and RNF168-dependent manner and promotes the recruitment of TP53BP1 at DNA damage sites. Recruited to stalled replication forks by SPRTN: may act by mediating extraction of DNA polymerase eta (POLH) to prevent excessive translesion DNA synthesis and limit the incidence of mutations induced by DNA damage. Together with SPRTN metalloprotease, involved in the repair of covalent DNA-protein cross-links (DPCs) during DNA synthesis. Involved in interstrand cross-link repair in response to replication stress by mediating unloading of the ubiquitinated CMG helicase complex. Mediates extraction of PARP1 trapped to chromatin: recognizes and binds ubiquitinated PARP1 and promotes its removal. Required for cytoplasmic retrotranslocation of stressed/damaged mitochondrial outer-membrane proteins and their subsequent proteasomal degradation. Essential for the maturation of ubiquitin-containing autophagosomes and the clearance of ubiquitinated protein by autophagy. Acts as a negative regulator of type I interferon production by interacting with RIGI: interaction takes place when RIGI is ubiquitinated via 'Lys-63'-linked ubiquitin on its CARD domains, leading to recruit RNF125 and promote ubiquitination and degradation of RIGI. May play a role in the ubiquitin-dependent sorting of membrane proteins to lysosomes where they undergo degradation. May more particularly play a role in caveolins sorting in cells. By controlling the steady-state expression of the IGF1R receptor, indirectly regulates the insulin-like growth factor receptor signaling pathway. This Bos taurus (Bovine) protein is Transitional endoplasmic reticulum ATPase (VCP).